The primary structure comprises 491 residues: Glutamyl-tRNA(Gln) amidotransferase subunit A (491 aa).

Catalysis depends on charge relay system residues Lys-77 and Ser-152. Ser-176 (acyl-ester intermediate) is an active-site residue.

The protein belongs to the amidase family. GatA subfamily. In terms of assembly, heterotrimer of A, B and C subunits.

The catalysed reaction is L-glutamyl-tRNA(Gln) + L-glutamine + ATP + H2O = L-glutaminyl-tRNA(Gln) + L-glutamate + ADP + phosphate + H(+). Its function is as follows. Allows the formation of correctly charged Gln-tRNA(Gln) through the transamidation of misacylated Glu-tRNA(Gln) in organisms which lack glutaminyl-tRNA synthetase. The reaction takes place in the presence of glutamine and ATP through an activated gamma-phospho-Glu-tRNA(Gln). The polypeptide is Glutamyl-tRNA(Gln) amidotransferase subunit A (gatA) (Chlamydia muridarum (strain MoPn / Nigg)).